The chain runs to 230 residues: Probable methylthioribulose-1-phosphate dehydratase (230 aa).

Cysteine 87 is a substrate binding site. Zn(2+)-binding residues include histidine 105 and histidine 107. Glutamate 129 (proton donor/acceptor) is an active-site residue. Histidine 185 contributes to the Zn(2+) binding site.

It belongs to the aldolase class II family. MtnB subfamily. Zn(2+) is required as a cofactor.

The protein localises to the cytoplasm. The enzyme catalyses 5-(methylsulfanyl)-D-ribulose 1-phosphate = 5-methylsulfanyl-2,3-dioxopentyl phosphate + H2O. Its pathway is amino-acid biosynthesis; L-methionine biosynthesis via salvage pathway; L-methionine from S-methyl-5-thio-alpha-D-ribose 1-phosphate: step 2/6. In terms of biological role, catalyzes the dehydration of methylthioribulose-1-phosphate (MTRu-1-P) into 2,3-diketo-5-methylthiopentyl-1-phosphate (DK-MTP-1-P). In Drosophila virilis (Fruit fly), this protein is Probable methylthioribulose-1-phosphate dehydratase.